We begin with the raw amino-acid sequence, 161 residues long: Capsid protein (161 aa).

The residue at position 2 (alanine 2) is an N-acetylalanine; by host.

The protein belongs to the virgaviridae capsid protein family.

The protein resides in the virion. Functionally, capsid protein self-assembles to form rod-shaped virions about 18 nm in diameter with a central canal enclosing the viral genomic RNA. The protein is Capsid protein (CP) of Cucumber green mottle mosaic virus (strain watermelon SH) (CGMMV).